A 496-amino-acid polypeptide reads, in one-letter code: NAD(P)H-quinone oxidoreductase subunit 2 A, chloroplastic (496 aa).

14 helical membrane passes run 13–33 (SILPECILIFSSIGILSIDLL), 41–61 (TFWSYSISLAALAISIIILLL), 83–103 (IFRFFLLICSFLCIPLSVDYI), 110–130 (VTEFLLFVLTATLGGMFLCGA), 133–153 (LISIFVASECLALSSYLLSGY), 168–188 (LLMGGASSSILVYGFSLPYGL), 213–233 (VSIAMIFILVGIGFKLSLVPF), 245–265 (PTPVVAFFSVTSKVAALALAT), 279–299 (WHLPLEILAILSMILGNLIAV), 307–327 (MLAYSSISQIGYILIGIIAGD), 338–358 (YMLIYIFMNLGTFACITSFGL), 380–400 (LSLVLCLLSLGGIPPLAGFFG), 413–435 (LYFLVSIALFTSVISIYYYSRII), and 470–490 (MILCTIASTVPGILINPIIAI).

The protein belongs to the complex I subunit 2 family. In terms of assembly, NDH is composed of at least 16 different subunits, 5 of which are encoded in the nucleus.

Its subcellular location is the plastid. It localises to the chloroplast thylakoid membrane. The catalysed reaction is a plastoquinone + NADH + (n+1) H(+)(in) = a plastoquinol + NAD(+) + n H(+)(out). It carries out the reaction a plastoquinone + NADPH + (n+1) H(+)(in) = a plastoquinol + NADP(+) + n H(+)(out). Functionally, NDH shuttles electrons from NAD(P)H:plastoquinone, via FMN and iron-sulfur (Fe-S) centers, to quinones in the photosynthetic chain and possibly in a chloroplast respiratory chain. The immediate electron acceptor for the enzyme in this species is believed to be plastoquinone. Couples the redox reaction to proton translocation, and thus conserves the redox energy in a proton gradient. The protein is NAD(P)H-quinone oxidoreductase subunit 2 A, chloroplastic of Psilotum nudum (Whisk fern).